Here is a 586-residue protein sequence, read N- to C-terminus: Eukaryotic translation initiation factor 3 subunit D (586 aa).

Disordered stretches follow at residues 16–37 and 104–176; these read EDSW…YAPF and KRTF…REPS. The segment covering 108–131 has biased composition (gly residues); that stretch reads GRGGGTVFRGRAQRGGAGQRGGRA. Residues 162–174 show a composition bias toward basic and acidic residues; sequence GWKDYDKPQRTRE. The segment at 301-315 is RNA gate; that stretch reads SIDLVTVNENAADAP. Residues 563 to 586 form a disordered region; sequence ANTFEEDDEAADEQEEKATEESEE. Residues 566–577 are compositionally biased toward acidic residues; that stretch reads FEEDDEAADEQE.

It belongs to the eIF-3 subunit D family. In terms of assembly, component of the eukaryotic translation initiation factor 3 (eIF-3) complex.

It localises to the cytoplasm. MRNA cap-binding component of the eukaryotic translation initiation factor 3 (eIF-3) complex, which is involved in protein synthesis of a specialized repertoire of mRNAs and, together with other initiation factors, stimulates binding of mRNA and methionyl-tRNAi to the 40S ribosome. The eIF-3 complex specifically targets and initiates translation of a subset of mRNAs involved in cell proliferation. In the eIF-3 complex, eif3d specifically recognizes and binds the 7-methylguanosine cap of a subset of mRNAs. In Aspergillus clavatus (strain ATCC 1007 / CBS 513.65 / DSM 816 / NCTC 3887 / NRRL 1 / QM 1276 / 107), this protein is Eukaryotic translation initiation factor 3 subunit D.